Consider the following 865-residue polypeptide: Alanine--tRNA ligase (865 aa).

Residues histidine 554, histidine 558, cysteine 656, and histidine 660 each contribute to the Zn(2+) site.

Belongs to the class-II aminoacyl-tRNA synthetase family. Requires Zn(2+) as cofactor.

The protein localises to the cytoplasm. It carries out the reaction tRNA(Ala) + L-alanine + ATP = L-alanyl-tRNA(Ala) + AMP + diphosphate. Catalyzes the attachment of alanine to tRNA(Ala) in a two-step reaction: alanine is first activated by ATP to form Ala-AMP and then transferred to the acceptor end of tRNA(Ala). Also edits incorrectly charged Ser-tRNA(Ala) and Gly-tRNA(Ala) via its editing domain. The sequence is that of Alanine--tRNA ligase from Francisella philomiragia subsp. philomiragia (strain ATCC 25017 / CCUG 19701 / FSC 153 / O#319-036).